Consider the following 542-residue polypeptide: ATP synthase subunit alpha (542 aa).

Residue 176–183 participates in ATP binding; that stretch reads GDRQTGKT.

This sequence belongs to the ATPase alpha/beta chains family. In terms of assembly, F-type ATPases have 2 components, CF(1) - the catalytic core - and CF(0) - the membrane proton channel. CF(1) has five subunits: alpha(3), beta(3), gamma(1), delta(1), epsilon(1). CF(0) has three main subunits: a(1), b(2) and c(9-12). The alpha and beta chains form an alternating ring which encloses part of the gamma chain. CF(1) is attached to CF(0) by a central stalk formed by the gamma and epsilon chains, while a peripheral stalk is formed by the delta and b chains.

It is found in the cell membrane. The enzyme catalyses ATP + H2O + 4 H(+)(in) = ADP + phosphate + 5 H(+)(out). Its function is as follows. Produces ATP from ADP in the presence of a proton gradient across the membrane. The alpha chain is a regulatory subunit. In Tropheryma whipplei (strain TW08/27) (Whipple's bacillus), this protein is ATP synthase subunit alpha.